A 230-amino-acid chain; its full sequence is Secretory carrier-associated membrane protein 4 (230 aa).

Residues 1-39 (MSGKENNFPPLPKFIPLKPCFYQNFSDEIPIEHQVLVKR) are Cytoplasmic-facing. 4 helical membrane-spanning segments follow: residues 40 to 60 (IYRL…ACLA), 61 to 81 (WWIA…LLLF), 105 to 125 (FMAF…QAVG), and 149 to 169 (VVML…AVMI). The Cytoplasmic segment spans residues 170–230 (MKVHSIYRGT…SYPASGGQWP (61 aa)). Threonine 194 is subject to Phosphothreonine. The interval 208 to 230 (FSGNSLPEYPTVPSYPASGGQWP) is disordered.

This sequence belongs to the SCAMP family.

It is found in the membrane. Functionally, probably involved in membrane protein trafficking. The chain is Secretory carrier-associated membrane protein 4 (SCAMP4) from Bos taurus (Bovine).